The following is a 323-amino-acid chain: Iron-sulfur cluster transfer protein NUBPL (323 aa).

ATP is bound at residue 65–72; sequence AKGGVGKS.

The protein belongs to the Mrp/NBP35 ATP-binding proteins family. It depends on [4Fe-4S] cluster as a cofactor.

It localises to the mitochondrion. Iron-sulfur cluster transfer protein involved in the assembly of the mitochondrial membrane respiratory chain NADH dehydrogenase (Complex I). May deliver one or more Fe-S clusters to complex I subunits. This chain is Iron-sulfur cluster transfer protein NUBPL (nubpl), found in Dictyostelium discoideum (Social amoeba).